Reading from the N-terminus, the 162-residue chain is Large ribosomal subunit protein uL10 (162 aa).

It belongs to the universal ribosomal protein uL10 family. In terms of assembly, part of the ribosomal stalk of the 50S ribosomal subunit. The N-terminus interacts with L11 and the large rRNA to form the base of the stalk. The C-terminus forms an elongated spine to which L12 dimers bind in a sequential fashion forming a multimeric L10(L12)X complex.

In terms of biological role, forms part of the ribosomal stalk, playing a central role in the interaction of the ribosome with GTP-bound translation factors. This Borreliella afzelii (strain PKo) (Borrelia afzelii) protein is Large ribosomal subunit protein uL10.